A 204-amino-acid polypeptide reads, in one-letter code: LexA repressor (204 aa).

The H-T-H motif DNA-binding region spans 27–47 (VREIGEAVGLASSSTVHGHLA). Residues S126 and K164 each act as for autocatalytic cleavage activity in the active site.

It belongs to the peptidase S24 family. As to quaternary structure, homodimer.

It carries out the reaction Hydrolysis of Ala-|-Gly bond in repressor LexA.. Functionally, represses a number of genes involved in the response to DNA damage (SOS response), including recA and lexA. In the presence of single-stranded DNA, RecA interacts with LexA causing an autocatalytic cleavage which disrupts the DNA-binding part of LexA, leading to derepression of the SOS regulon and eventually DNA repair. The sequence is that of LexA repressor from Listeria welshimeri serovar 6b (strain ATCC 35897 / DSM 20650 / CCUG 15529 / CIP 8149 / NCTC 11857 / SLCC 5334 / V8).